The primary structure comprises 632 residues: Palmitoyltransferase ZDHHC17 (632 aa).

The Cytoplasmic segment spans residues 1–304; the sequence is MQREEGFNTK…LKADKEFRQK (304 aa). The necessary and sufficient for interaction with DNAJC5 and SNAP25 stretch occupies residues 11–305; that stretch reads MADGPDEYET…KADKEFRQKV (295 aa). ANK repeat units follow at residues 51 to 86, 89 to 118, 123 to 152, 156 to 185, 189 to 219, 224 to 253, and 257 to 286; these read THIDDYSTWDIVKATQYGIYERCRELVEAGYDVRQP, ENVTLLHWAAINNRIDLVKYYISKGAIVDQ, LNSTPLHWATRQGHLSMVVQLMKYGADPSL, EGCSCIHLAAQFGHTSIVAYLIAKGQDVDM, NGMTPLMWAAYRTHSVDPTRLLLTFNVSVNL, HKNTALHWAVLAGNTTVISLLLEAGGNVDA, and KGESALDLAKQRKNVWMINHLQEARQAKGY. 2 consecutive transmembrane segments (helical) span residues 305–325 and 326–346; these read VMLGTPFLVIWLVGFIADLDI and DSWLIKGLMYGGVWATVQFLS. Residues 347-357 are Cytoplasmic-facing; it reads KSFFDHSMHSA. Residues 358–378 traverse the membrane as a helical segment; sequence LPLGIYLATKFWMYVTWFFWF. Over 379 to 381 the chain is Lumenal; that stretch reads WND. Residues 382–402 form a helical membrane-spanning segment; it reads LNFLFIHLPFLANSVALFYNF. The Cytoplasmic portion of the chain corresponds to 403 to 480; that stretch reads GKSWKSDPGI…GNCVGAGNHR (78 aa). The 51-residue stretch at 437-487 folds into the DHHC domain; it reads IFCSTCLIRKPVRSKHCGVCNRCIAKFDHHCPWVGNCVGAGNHRYFMGYLF. The active-site S-palmitoyl cysteine intermediate is Cys467. A helical membrane pass occupies residues 481–501; it reads YFMGYLFFLLFMICWMIYGCV. The Lumenal portion of the chain corresponds to 502–529; that stretch reads SYWGLHCETTYTKDGFWTYITQIATCSP. The chain crosses the membrane as a helical span at residues 530–550; the sequence is WMFWMFLNSVFHFLWVAVLLM. Residues 551-632 are Cytoplasmic-facing; the sequence is CQLYQITCLG…QISGSGYQLV (82 aa).

This sequence belongs to the DHHC palmitoyltransferase family. AKR/ZDHHC17 subfamily. As to quaternary structure, interacts (via ANK repeats) with numerous proteins (via the consensus sequence motif [VIAP]-[VIT]-x-x-Q-P). Interacts (via ANK repeats) with CLIP3. Interacts (via ANK repeats) with HTT. Interacts (via ANK repeats) with DNAJC5 (via C-terminus). Interacts (via ANK repeats) with MAP6. Interacts (via ANK repeats) with SNAP23. Interacts (via ANK repeats) with SNAP25. Interacts (via ANK repeats) with EVL. Interacts with SPRED1 and SPRED3. Interacts with GPM6A and OPTN. May interact (via ANK repeats) with SPRED2. May interact with NTRK1; may regulate its localization and function. In terms of processing, autopalmitoylated. Autopalmitoylation has a regulatory role in ZDHHC17-mediated Mg(2+) transport. In terms of tissue distribution, expressed in liver, testis, kidney, heart, pancreas and brain. Highest expression was seen in the brain. Localized predominantly in the perinuclear regions of neurons from the cortex, striatum and hippocampus. Colocalized with HTT in the medium spiny neurons of the striatum and the spiny neurons that project into the globus pallidus.

The protein resides in the golgi apparatus membrane. Its subcellular location is the cytoplasmic vesicle membrane. It is found in the presynaptic cell membrane. The enzyme catalyses L-cysteinyl-[protein] + hexadecanoyl-CoA = S-hexadecanoyl-L-cysteinyl-[protein] + CoA. The catalysed reaction is L-cysteinyl-[protein] + tetradecanoyl-CoA = S-tetradecanoyl-L-cysteinyl-[protein] + CoA. It catalyses the reaction L-cysteinyl-[protein] + octadecanoyl-CoA = S-octadecanoyl-L-cysteinyl-[protein] + CoA. Palmitoyltransferase that catalyzes the addition of palmitate onto various protein substrates and is involved in a variety of cellular processes. Has no stringent fatty acid selectivity and in addition to palmitate can also transfer onto target proteins myristate from tetradecanoyl-CoA and stearate from octadecanoyl-CoA. Palmitoyltransferase specific for a subset of neuronal proteins, including SNAP25, DLG4/PSD95, GAD2, SYT1 and HTT. Also palmitoylates neuronal protein GPM6A as well as SPRED1 and SPRED3. Could also play a role in axonogenesis through the regulation of NTRK1 and the downstream ERK1/ERK2 signaling cascade. May be involved in the sorting or targeting of critical proteins involved in the initiating events of endocytosis at the plasma membrane. May play a role in Mg(2+) transport. Could also palmitoylate DNAJC5 and regulate its localization to the Golgi membrane. Palmitoylates CASP6, thereby preventing its dimerization and subsequent activation. This Mus musculus (Mouse) protein is Palmitoyltransferase ZDHHC17.